Reading from the N-terminus, the 127-residue chain is uncharacterized protein (127 aa).

The chain crosses the membrane as a helical span at residues 5-25; it reads ILGITIAFIILLLTTVAILFS.

Its subcellular location is the membrane. This is an uncharacterized protein from Mycoplasma genitalium (strain ATCC 33530 / DSM 19775 / NCTC 10195 / G37) (Mycoplasmoides genitalium).